The chain runs to 194 residues: Peptidyl-tRNA hydrolase (194 aa).

Position 16 (Y16) interacts with tRNA. Residue H21 is the Proton acceptor of the active site. Residues F66, N68, and N114 each contribute to the tRNA site.

The protein belongs to the PTH family. Monomer.

Its subcellular location is the cytoplasm. It catalyses the reaction an N-acyl-L-alpha-aminoacyl-tRNA + H2O = an N-acyl-L-amino acid + a tRNA + H(+). Hydrolyzes ribosome-free peptidyl-tRNAs (with 1 or more amino acids incorporated), which drop off the ribosome during protein synthesis, or as a result of ribosome stalling. In terms of biological role, catalyzes the release of premature peptidyl moieties from peptidyl-tRNA molecules trapped in stalled 50S ribosomal subunits, and thus maintains levels of free tRNAs and 50S ribosomes. The chain is Peptidyl-tRNA hydrolase from Geobacter metallireducens (strain ATCC 53774 / DSM 7210 / GS-15).